A 264-amino-acid polypeptide reads, in one-letter code: Undecaprenyl-diphosphatase (264 aa).

The next 6 helical transmembrane spans lie at 41 to 61 (NLAF…VILW), 82 to 102 (YVIN…FFKD), 106 to 126 (AIFG…AALL), 140 to 160 (ISMK…LPGL), 213 to 233 (IPAL…CLAC), and 244 to 264 (KLIY…ITQL).

This sequence belongs to the UppP family.

The protein resides in the cell inner membrane. The catalysed reaction is di-trans,octa-cis-undecaprenyl diphosphate + H2O = di-trans,octa-cis-undecaprenyl phosphate + phosphate + H(+). Its function is as follows. Catalyzes the dephosphorylation of undecaprenyl diphosphate (UPP). Confers resistance to bacitracin. In Bacteroides thetaiotaomicron (strain ATCC 29148 / DSM 2079 / JCM 5827 / CCUG 10774 / NCTC 10582 / VPI-5482 / E50), this protein is Undecaprenyl-diphosphatase.